The primary structure comprises 773 residues: MVKEIASWLLILSMVVFVSPVLAINGGGYPRCNCEDEGNSFWSTENILETQRVSDFLIAVAYFSIPIELLYFVSCSNVPFKWVLFEFIAFIVLCGMTHLLHGWTYSAHPFRLMMAFTVFKMLTALVSCATAITLITLIPLLLKVKVREFMLKKKAHELGREVGLILIKKETGFHVRMLTQEIRKSLDRHTILYTTLVELSKTLGLQNCAVWMPNDGGTEMDLTHELRGRGGYGGCSVSMEDLDVVRIRESDEVNVLSVDSSIARASGGGGDVSEIGAVAAIRMPMLRVSDFNGELSYAILVCVLPGGTPRDWTYQEIEIVKVVADQVTVALDHAAVLEESQLMREKLAEQNRALQMAKRDALRASQARNAFQKTMSEGMRRPMHSILGLLSMIQDEKLSDEQKMIVDTMVKTGNVMSNLVGDSMDVPDGRFGTEMKPFSLHRTIHEAACMARCLCLCNGIRFLVDAEKSLPDNVVGDERRVFQVILHIVGSLVKPRKRQEGSSLMFKVLKERGSLDRSDHRWAAWRSPASSADGDVYIRFEMNVENDDSSSQSFASVSSRDQEVGDVRFSGGYGLGQDLSFGVCKKVVQLIHGNISVVPGSDGSPETMSLLLRFRRRPSISVHGSSESPAPDHHAHPHSNSLLRGLQVLLVDTNDSNRAVTRKLLEKLGCDVTAVSSGFDCLTAIAPGSSSPSTSFQVVVLDLQMAEMDGYEVAMRIRSRSWPLIVATTVSLDEEMWDKCAQIGINGVVRKPVVLRAMESELRRVLLQADQLL.

4 consecutive transmembrane segments (helical) span residues 4-24 (EIASWLLILSMVVFVSPVLAI), 53-73 (VSDFLIAVAYFSIPIELLYFV), 82-102 (WVLFEFIAFIVLCGMTHLLHG), and 122-142 (LTALVSCATAITLITLIPLLL). Cu cation contacts are provided by C94 and H98. Positions 187–331 (DRHTILYTTL…VVADQVTVAL (145 aa)) constitute a GAF domain. Residues 374-614 (TMSEGMRRPM…PETMSLLLRF (241 aa)) form the Histidine kinase domain. One can recognise a Response regulatory domain in the interval 647-766 (QVLLVDTNDS…AMESELRRVL (120 aa)). D702 is subject to 4-aspartylphosphate. K751 is covalently cross-linked (Glycyl lysine isopeptide (Lys-Gly) (interchain with G-Cter in ubiquitin)).

This sequence belongs to the ethylene receptor family. As to quaternary structure, heteromer with ETR1. Binds to MRF3/ECIP1. Cu cation serves as cofactor. Post-translationally, autophosphorylated predominantly on Ser residues. Expressed in seedlings, roots, leaves, flowers, mature siliques, shoot apical meristems, leaf primordia, inflorescence meristems, young floral meristems, developing petals, carpels and ovules. Low expression in stamens.

Its subcellular location is the endoplasmic reticulum membrane. Ethylene receptor related to bacterial two-component regulators. Acts as a redundant negative regulator of ethylene signaling. In Arabidopsis thaliana (Mouse-ear cress), this protein is Ethylene receptor 2.